Consider the following 473-residue polypeptide: Glutamine synthetase (473 aa).

A GS beta-grasp domain is found at 15–100 (ENIKIIDLKF…ICSIKEPRTG (86 aa)). Residues 107–473 (PRTIAAKAVE…PYEFSLYYDC (367 aa)) enclose the GS catalytic domain. Mn(2+) is bound at residue glutamate 132. Glutamate 134 lines the Mg(2+) pocket. Glutamate 210 contributes to the ATP binding site. Residues glutamate 215 and glutamate 223 each coordinate Mg(2+). Residues 267-268 (NG) and glycine 268 each bind L-glutamate. Histidine 272 provides a ligand contact to Mg(2+). Residues 274 to 276 (HQS) and serine 276 each bind ATP. The L-glutamate site is built by arginine 324, glutamate 330, and arginine 342. Arginine 342, arginine 347, and lysine 356 together coordinate ATP. Residue glutamate 361 coordinates Mn(2+). Residue arginine 363 coordinates L-glutamate. At tyrosine 401 the chain carries O-AMP-tyrosine.

The protein belongs to the glutamine synthetase family. As to quaternary structure, oligomer of 12 subunits arranged in the form of two hexagons. Requires Mg(2+) as cofactor.

Its subcellular location is the cytoplasm. It carries out the reaction L-glutamate + NH4(+) + ATP = L-glutamine + ADP + phosphate + H(+). Its activity is regulated as follows. Inhibited by ADP (90%), AMP (80%), alanine (52%) and aspartate (41%). The activity of this enzyme could be controlled by adenylation under conditions of abundant glutamine. Its function is as follows. Involved in nitrogen metabolism via ammonium assimilation. Catalyzes the ATP-dependent biosynthesis of glutamine from glutamate and ammonia. In Synechocystis sp. (strain ATCC 27184 / PCC 6803 / Kazusa), this protein is Glutamine synthetase.